The sequence spans 71 residues: MIIAIVAVVIFLLNFLTPYGYMPMMGYGGGMMGYSDERYYPPGCCQGPAESSSNGGSMITKPSTGACQGGR.

The chain crosses the membrane as a helical span at residues 2 to 24 (IIAIVAVVIFLLNFLTPYGYMPM). The segment at 48-71 (PAESSSNGGSMITKPSTGACQGGR) is disordered. Over residues 49–71 (AESSSNGGSMITKPSTGACQGGR) the composition is skewed to polar residues.

The protein resides in the membrane. This is an uncharacterized protein from Archaeoglobus fulgidus (strain ATCC 49558 / DSM 4304 / JCM 9628 / NBRC 100126 / VC-16).